The following is a 194-amino-acid chain: Small ribosomal subunit protein uS4c (194 aa).

The segment at 13–36 (GLTSKRPRSGSDPKNQLRSGKKSQ) is disordered. Positions 82–143 (MRLDNILFRL…KQRSKALIQN (62 aa)) constitute an S4 RNA-binding domain.

The protein belongs to the universal ribosomal protein uS4 family. As to quaternary structure, part of the 30S ribosomal subunit. Contacts protein S5. The interaction surface between S4 and S5 is involved in control of translational fidelity.

The protein resides in the plastid. The protein localises to the chloroplast. In terms of biological role, one of the primary rRNA binding proteins, it binds directly to 16S rRNA where it nucleates assembly of the body of the 30S subunit. Functionally, with S5 and S12 plays an important role in translational accuracy. This Moraea spathulata (Large yellow moraea) protein is Small ribosomal subunit protein uS4c (rps4).